The following is an 84-amino-acid chain: Small ribosomal subunit protein uS17 (84 aa).

Belongs to the universal ribosomal protein uS17 family. In terms of assembly, part of the 30S ribosomal subunit.

Its function is as follows. One of the primary rRNA binding proteins, it binds specifically to the 5'-end of 16S ribosomal RNA. In Pectobacterium atrosepticum (strain SCRI 1043 / ATCC BAA-672) (Erwinia carotovora subsp. atroseptica), this protein is Small ribosomal subunit protein uS17.